Here is a 78-residue protein sequence, read N- to C-terminus: MSNIEDRVRKIIIEQLGVDEAEVKNEASFVDDLGADSLDTVELVMALEEEFDTEIPDEAAEKITTVQAAIDYVNSASE.

One can recognise a Carrier domain in the interval 2 to 77; the sequence is SNIEDRVRKI…AAIDYVNSAS (76 aa). Serine 37 bears the O-(pantetheine 4'-phosphoryl)serine mark.

It belongs to the acyl carrier protein (ACP) family. In terms of processing, 4'-phosphopantetheine is transferred from CoA to a specific serine of apo-ACP by AcpS. This modification is essential for activity because fatty acids are bound in thioester linkage to the sulfhydryl of the prosthetic group.

Its subcellular location is the cytoplasm. The protein operates within lipid metabolism; fatty acid biosynthesis. Its function is as follows. Carrier of the growing fatty acid chain in fatty acid biosynthesis. The protein is Acyl carrier protein of Photobacterium profundum (strain SS9).